We begin with the raw amino-acid sequence, 225 residues long: Adenosylcobinamide-GDP ribazoletransferase (225 aa).

Helical transmembrane passes span 34-54 (FVGI…FWFL), 93-113 (NLGT…FYSF), 116-136 (VSAF…LLLL), 165-185 (PLLL…AITI), and 204-224 (VVGA…YFLA).

Belongs to the CobS family. Requires Mg(2+) as cofactor.

Its subcellular location is the cell membrane. The enzyme catalyses alpha-ribazole + adenosylcob(III)inamide-GDP = adenosylcob(III)alamin + GMP + H(+). The catalysed reaction is alpha-ribazole 5'-phosphate + adenosylcob(III)inamide-GDP = adenosylcob(III)alamin 5'-phosphate + GMP + H(+). It functions in the pathway cofactor biosynthesis; adenosylcobalamin biosynthesis; adenosylcobalamin from cob(II)yrinate a,c-diamide: step 7/7. Joins adenosylcobinamide-GDP and alpha-ribazole to generate adenosylcobalamin (Ado-cobalamin). Also synthesizes adenosylcobalamin 5'-phosphate from adenosylcobinamide-GDP and alpha-ribazole 5'-phosphate. The chain is Adenosylcobinamide-GDP ribazoletransferase (cobS1) from Archaeoglobus fulgidus (strain ATCC 49558 / DSM 4304 / JCM 9628 / NBRC 100126 / VC-16).